Here is an 833-residue protein sequence, read N- to C-terminus: Leucine--tRNA ligase (833 aa).

The 'HIGH' region motif lies at 41–52 (PYPSGAGLHVGH). The short motif at 610-614 (KMSKS) is the 'KMSKS' region element. Position 613 (Lys-613) interacts with ATP.

The protein belongs to the class-I aminoacyl-tRNA synthetase family.

Its subcellular location is the cytoplasm. It catalyses the reaction tRNA(Leu) + L-leucine + ATP = L-leucyl-tRNA(Leu) + AMP + diphosphate. The protein is Leucine--tRNA ligase of Streptococcus suis (strain 98HAH33).